Consider the following 200-residue polypeptide: Small ribosomal subunit protein uS4 (200 aa).

The tract at residues 20–41 (SGTGKELEKRPYAPGQHGPNQR) is disordered. The S4 RNA-binding domain maps to 92–155 (ARLDAVVYSL…LKLDIIAESV (64 aa)).

The protein belongs to the universal ribosomal protein uS4 family. In terms of assembly, part of the 30S ribosomal subunit. Contacts protein S5. The interaction surface between S4 and S5 is involved in control of translational fidelity.

In terms of biological role, one of the primary rRNA binding proteins, it binds directly to 16S rRNA where it nucleates assembly of the body of the 30S subunit. Its function is as follows. With S5 and S12 plays an important role in translational accuracy. The protein is Small ribosomal subunit protein uS4 of Staphylococcus saprophyticus subsp. saprophyticus (strain ATCC 15305 / DSM 20229 / NCIMB 8711 / NCTC 7292 / S-41).